Consider the following 119-residue polypeptide: DNA-directed RNA polymerase subunit omega (119 aa).

The protein belongs to the RNA polymerase subunit omega family. As to quaternary structure, the RNAP catalytic core consists of 2 alpha, 1 beta, 1 beta' and 1 omega subunit. When a sigma factor is associated with the core the holoenzyme is formed, which can initiate transcription.

The enzyme catalyses RNA(n) + a ribonucleoside 5'-triphosphate = RNA(n+1) + diphosphate. Its function is as follows. Promotes RNA polymerase assembly. Latches the N- and C-terminal regions of the beta' subunit thereby facilitating its interaction with the beta and alpha subunits. The polypeptide is DNA-directed RNA polymerase subunit omega (Caulobacter sp. (strain K31)).